We begin with the raw amino-acid sequence, 1017 residues long: EMILIN-1 (1017 aa).

A signal peptide spans 1–21 (MAPRALWSCYLCCLLTIATEA). In terms of domain architecture, EMI spans 56–133 (HRNWCAYVVT…QGYGGDDCGE (78 aa)). 3 disulfides stabilise this stretch: cysteine 60–cysteine 123, cysteine 87–cysteine 94, and cysteine 122–cysteine 131. 2 disordered regions span residues 134–180 (GPAS…SEKV) and 259–289 (ELGHLNNHHNGGPGGGGRASGPVPVPSGPSE). Positions 154-167 (RPNLSGSSAGSHLS) are enriched in low complexity. The N-linked (GlcNAc...) asparagine glycan is linked to asparagine 156. Coiled-coil stretches lie at residues 171–211 (GEGP…LAED), 237–266 (ETLSEIQQQLQLLDNRVSTHDQELGHLNNH), and 310–374 (LDGF…DVVT). A disordered region spans residues 383-403 (RRGSELGGAAGQGGHPPGYTS). The segment covering 387-398 (ELGGAAGQGGHP) has biased composition (gly residues). Residues asparagine 416, asparagine 456, asparagine 562, and asparagine 659 are each glycosylated (N-linked (GlcNAc...) asparagine). Residues 519 to 573 (LHEAEAAGEAQQAVLEGLQGLLSRLRERMDAQEETAAEILLRLNLTAAQLSQLEG) are a coiled coil. Residues 676–697 (LADLGATKDSIISEINRLQQEA) adopt a coiled-coil conformation. N-linked (GlcNAc...) asparagine glycans are attached at residues asparagine 767 and asparagine 795. A coiled-coil region spans residues 789-809 (RRLGALNNSLLLLEDRLQQLS). Over residues 811 to 820 (KDFTGPSGKA) the composition is skewed to low complexity. The tract at residues 811–866 (KDFTGPSGKAGPPGPPGLQGPSGPAGPPGPPGKDGQQGAIGPPGPQGEQGAEGAPA) is disordered. The 51-residue stretch at 815–865 (GPSGKAGPPGPPGLQGPSGPAGPPGPPGKDGQQGAIGPPGPQGEQGAEGAP) folds into the Collagen-like domain. The segment covering 822 to 841 (PPGPPGLQGPSGPAGPPGPP) has biased composition (pro residues). The segment covering 843 to 866 (KDGQQGAIGPPGPQGEQGAEGAPA) has biased composition (low complexity). Residues 867–1014 (APVPRVAFSA…GALLYEDTEL (148 aa)) enclose the C1q domain.

In terms of assembly, homotrimer associated through a moderately stable interaction of the C-terminal globular C1q domains, allowing the nucleation of the triple helix and then a further quaternary assembly to higher-order polymers via intermolecular disulfide bonds. Interacts with EMILIN2. Interacts with EFEMP2; this interaction promotes the incorporation of EFEMP2 into the extracellular matrix.

It localises to the secreted. It is found in the extracellular space. Its subcellular location is the extracellular matrix. Its function is as follows. Involved in elastic and collagen fibers formation. It is required for EFEMP2 deposition into the extracellular matrix, and collagen network assembly and cross-linking via protein-lysine 6-oxidase/LOX activity. May be responsible for anchoring smooth muscle cells to elastic fibers, and may be involved the processes that regulate vessel assembly. Has cell adhesive capacity. May have a function in placenta formation and initial organogenesis and a later role in interstitial connective tissue. This is EMILIN-1 (Emilin1) from Mus musculus (Mouse).